A 293-amino-acid chain; its full sequence is 4-hydroxy-tetrahydrodipicolinate synthase (293 aa).

Thr45 serves as a coordination point for pyruvate. Tyr133 serves as the catalytic Proton donor/acceptor. Lys161 acts as the Schiff-base intermediate with substrate in catalysis. Residue Val203 coordinates pyruvate.

Belongs to the DapA family. As to quaternary structure, homotetramer; dimer of dimers.

It is found in the cytoplasm. The enzyme catalyses L-aspartate 4-semialdehyde + pyruvate = (2S,4S)-4-hydroxy-2,3,4,5-tetrahydrodipicolinate + H2O + H(+). The protein operates within amino-acid biosynthesis; L-lysine biosynthesis via DAP pathway; (S)-tetrahydrodipicolinate from L-aspartate: step 3/4. Catalyzes the condensation of (S)-aspartate-beta-semialdehyde [(S)-ASA] and pyruvate to 4-hydroxy-tetrahydrodipicolinate (HTPA). The sequence is that of 4-hydroxy-tetrahydrodipicolinate synthase from Exiguobacterium sp. (strain ATCC BAA-1283 / AT1b).